Reading from the N-terminus, the 338-residue chain is Glycerol-3-phosphate dehydrogenase [NAD(P)+] (338 aa).

Positions 14, 15, 35, and 109 each coordinate NADPH. 3 residues coordinate sn-glycerol 3-phosphate: lysine 109, glycine 138, and threonine 140. Alanine 142 contributes to the NADPH binding site. Lysine 194, aspartate 247, serine 257, arginine 258, and asparagine 259 together coordinate sn-glycerol 3-phosphate. The active-site Proton acceptor is lysine 194. Position 258 (arginine 258) interacts with NADPH. Residues valine 282 and glutamate 284 each coordinate NADPH.

It belongs to the NAD-dependent glycerol-3-phosphate dehydrogenase family.

It is found in the cytoplasm. It catalyses the reaction sn-glycerol 3-phosphate + NAD(+) = dihydroxyacetone phosphate + NADH + H(+). The enzyme catalyses sn-glycerol 3-phosphate + NADP(+) = dihydroxyacetone phosphate + NADPH + H(+). The protein operates within membrane lipid metabolism; glycerophospholipid metabolism. Functionally, catalyzes the reduction of the glycolytic intermediate dihydroxyacetone phosphate (DHAP) to sn-glycerol 3-phosphate (G3P), the key precursor for phospholipid synthesis. The polypeptide is Glycerol-3-phosphate dehydrogenase [NAD(P)+] (Sodalis glossinidius (strain morsitans)).